Consider the following 291-residue polypeptide: F-box protein PP2-A12 (291 aa).

Positions 25–71 constitute an F-box domain; sequence KPGLGDLPEACVAIIVENLDPVEICRFSKLNRAFRGASWADCVWESK.

This Arabidopsis thaliana (Mouse-ear cress) protein is F-box protein PP2-A12 (P2A12).